The chain runs to 660 residues: Cysteine--tRNA ligase, cytoplasmic (660 aa).

The span at 1–10 shows a compositional bias: polar residues; the sequence is MSENSSPKLE. Residues 1-20 form a disordered region; that stretch reads MSENSSPKLESTSAAAASTK. Cysteine 65 is a Zn(2+) binding site. The short motif at 67–77 is the 'HIGH' region element; the sequence is PTVYDASHMGH. The Zn(2+) site is built by cysteine 256, histidine 281, and glutamate 285. The 'KMSKS' region motif lies at 314–318; sequence KMSKS. Lysine 317 serves as a coordination point for ATP. 2 disordered regions span residues 563-584 and 627-660; these read IEKK…KFEK and QKEY…QSPQ. Positions 627–639 are enriched in basic and acidic residues; that stretch reads QKEYDNQTKEHNN. Residues 643 to 660 are compositionally biased toward low complexity; the sequence is SLSTSTSSPTLTSTQSPQ.

The protein belongs to the class-I aminoacyl-tRNA synthetase family. Requires Zn(2+) as cofactor.

It is found in the cytoplasm. The enzyme catalyses tRNA(Cys) + L-cysteine + ATP = L-cysteinyl-tRNA(Cys) + AMP + diphosphate. In Dictyostelium discoideum (Social amoeba), this protein is Cysteine--tRNA ligase, cytoplasmic (cysS).